The sequence spans 274 residues: Small ribosomal subunit protein uS2 (274 aa).

Residues 255-274 (AEAESEDKGEVLYSFDDEEE) are disordered.

The protein belongs to the universal ribosomal protein uS2 family.

This is Small ribosomal subunit protein uS2 from Gloeobacter violaceus (strain ATCC 29082 / PCC 7421).